A 771-amino-acid polypeptide reads, in one-letter code: Phosphoglycerate kinase (771 aa).

Residues 1–406 (MKKLITDLNL…PGIDAIQNYE (406 aa)) form a phosphoglycerate kinase region. Residues 20–22 (DLN), arginine 35, 58–61 (HLGR), arginine 118, and arginine 155 contribute to the substrate site. ATP-binding positions include lysine 206, glycine 295, glutamate 334, and 361-364 (GGDS). The interval 407–771 (QTYEQYDSQV…KRFWFFGRKR (365 aa)) is unknown.

It in the N-terminal section; belongs to the phosphoglycerate kinase family. Monomer.

It localises to the cytoplasm. It carries out the reaction (2R)-3-phosphoglycerate + ATP = (2R)-3-phospho-glyceroyl phosphate + ADP. Its pathway is carbohydrate degradation; glycolysis; pyruvate from D-glyceraldehyde 3-phosphate: step 2/5. This chain is Phosphoglycerate kinase (pgk), found in Mycoplasmopsis pulmonis (strain UAB CTIP) (Mycoplasma pulmonis).